The primary structure comprises 370 residues: Cell division protein DivIB (370 aa).

Residues 1–65 (MKKKKDEELT…SNKKGTKRIV (65 aa)) form a disordered region. Residues 1–74 (MKKKKDEELT…VKEQRLSRQK (74 aa)) are Cytoplasmic-facing. Composition is skewed to basic residues over residues 25 to 34 (SRFKRKRKAT) and 47 to 63 (RNNR…GTKR). A helical transmembrane segment spans residues 75–95 (LGILIGSTLIVIALFFGYFYS). Topologically, residues 96-370 (SISRVQKFSV…STVNTQQDID (275 aa)) are extracellular. The POTRA domain occupies 98 to 169 (SRVQKFSVSG…GKVKIKVKEN (72 aa)). Residues 295–370 (SGWTDEAKAA…STVNTQQDID (76 aa)) form a disordered region. 2 stretches are compositionally biased toward low complexity: residues 304-314 (ASESSKSAESS) and 327-342 (SESA…STET). Positions 356–370 (SSNAESTVNTQQDID) are enriched in polar residues.

It belongs to the FtsQ/DivIB family. DivIB subfamily.

The protein localises to the cell membrane. Cell division protein that may be involved in stabilizing or promoting the assembly of the division complex. The protein is Cell division protein DivIB of Pediococcus pentosaceus (strain ATCC 25745 / CCUG 21536 / LMG 10740 / 183-1w).